The primary structure comprises 327 residues: MAKAPMRVAVTGAAGQIGYSLLFRIANGDMLGKDQPVILQLLDLPQAQQAVKGVVMELEDCAFPLLAGVVITDDPKVAFKDADVALLVGARPRSKGMERKDLLEANAQIFTVQGKALDEVASRNVKVLVVGNPANTNAYIAMKSAPNLPRENFTAMLRLDHNRALSQIAAKTGKPVSSIEKLFVWGNHSPTMYADYRYATVDGKSVKDLINDPVWNNDVFLPTVGKRGAAIIEARGLSSAASAANAAIDHVRDWVLGTNGKVVTMGIPSNGEYGIPADTMFGYPVTTANGKYEIVKGLEIDAYSQEKINITLNELEEEKAGVQHLLG.

12–18 (GAAGQIG) is a binding site for NAD(+). Substrate contacts are provided by Arg-93 and Arg-99. Residues Asn-106, Gln-113, and 130–132 (VGN) contribute to the NAD(+) site. Substrate-binding residues include Asn-132 and Arg-163. His-188 functions as the Proton acceptor in the catalytic mechanism.

The protein belongs to the LDH/MDH superfamily. MDH type 2 family.

It carries out the reaction (S)-malate + NAD(+) = oxaloacetate + NADH + H(+). Functionally, catalyzes the reversible oxidation of malate to oxaloacetate. The protein is Malate dehydrogenase of Cupriavidus necator (strain ATCC 17699 / DSM 428 / KCTC 22496 / NCIMB 10442 / H16 / Stanier 337) (Ralstonia eutropha).